A 518-amino-acid chain; its full sequence is MTEPTQPNAAQPDAARPNVAPEMDDNKIMTERREKLRELREQGVAYPNDFRPTHHAEDLQSQYEQSDKEALEANPLEVAIAGRMMLKRVMGKASFATVRDGSGQIQFFITPTDVGQETYDAFKKWDMGDIVAARGVLFRTNKGELSVRCTELRLLSKSLRPLPDKFHGLADQEMKYRQRYVDLIVTPETRKTFVARTKAISSIRKFMAEADFMEVETPMLHPIPGGAAAKPFTTHHNALDMQMFLRIAPELYLKRLVVGGFERVFEINRNFRNEGVSVRHNPEFTMIEFYAAYTDYKWLMDFTEQLIRQAAIDALGTATITYQGRELDLAKPFHRLTITQAIQKYAPQYTNEQLADSAFLRTELKKFGVDASQPQFLNAGVGSLQLALFEETAESQLWEPTYIIDYPIEVSPLARASDKVAGITERFELFITGREIANGFSELNDPEDQAARFKKQVDQKEAGDEEAMFYDADYIRALEYGMPPAGGCGIGIDRLVMMLTDSPSIRDVILFPHLRRED.

A disordered region spans residues 1–28 (MTEPTQPNAAQPDAARPNVAPEMDDNKI). 2 residues coordinate Mg(2+): E428 and E435.

This sequence belongs to the class-II aminoacyl-tRNA synthetase family. As to quaternary structure, homodimer. Requires Mg(2+) as cofactor.

It is found in the cytoplasm. It catalyses the reaction tRNA(Lys) + L-lysine + ATP = L-lysyl-tRNA(Lys) + AMP + diphosphate. The chain is Lysine--tRNA ligase from Paraburkholderia phytofirmans (strain DSM 17436 / LMG 22146 / PsJN) (Burkholderia phytofirmans).